Consider the following 479-residue polypeptide: Trigger factor (479 aa).

The PPIase FKBP-type domain maps to Gly174–Pro261. The interval Lys437–Ser479 is disordered. The span at Lys453 to Lys466 shows a compositional bias: basic residues. A compositionally biased stretch (basic and acidic residues) spans Ala467–Ser479.

It belongs to the FKBP-type PPIase family. Tig subfamily.

The protein localises to the cytoplasm. The catalysed reaction is [protein]-peptidylproline (omega=180) = [protein]-peptidylproline (omega=0). Its function is as follows. Involved in protein export. Acts as a chaperone by maintaining the newly synthesized protein in an open conformation. Functions as a peptidyl-prolyl cis-trans isomerase. The protein is Trigger factor of Prochlorococcus marinus (strain MIT 9303).